Consider the following 266-residue polypeptide: MNPEFAMPDVQSTVDTRQMPIQRVGVRAVRHPLTVRTAEGETQATVGTWNLDVHLPADQKGTHMSRFVALLEERGGPLTADAFRTMLATMLEKLEARAGRIEVSFPYFVNKTAPVSGVRSLLDYEVTLTGDVRDGLTRVFAKVLVPVTSLCPCSKKISQYGAHNQRSHVTIDAELAADVPVEDLIRIAEEEASCELWGLLKRPDEKFVTERAYENPKFVEDLVRDVARRLDADERIVAYVLEAENFESIHNHSAYALIERDKRRGA.

It belongs to the GTP cyclohydrolase IV family.

It catalyses the reaction GTP + H2O = 7,8-dihydroneopterin 3'-triphosphate + formate + H(+). It functions in the pathway cofactor biosynthesis; 7,8-dihydroneopterin triphosphate biosynthesis; 7,8-dihydroneopterin triphosphate from GTP: step 1/1. In terms of biological role, converts GTP to 7,8-dihydroneopterin triphosphate. The polypeptide is GTP cyclohydrolase FolE2 (Burkholderia mallei (strain ATCC 23344)).